The following is a 146-amino-acid chain: Large ribosomal subunit protein uL15 (146 aa).

Over residues 1–13 the composition is skewed to basic and acidic residues; that stretch reads MKLHELKAAEGSR. The disordered stretch occupies residues 1 to 56; sequence MKLHELKAAEGSRRVRNRVGRGAGSGNGKTSGRGQKGQKARSGGGVRPGFEGGQLP. 2 stretches are compositionally biased toward gly residues: residues 21–35 and 42–52; these read RGAGSGNGKTSGRGQ and SGGGVRPGFEG.

Belongs to the universal ribosomal protein uL15 family. Part of the 50S ribosomal subunit.

Functionally, binds to the 23S rRNA. This Staphylococcus haemolyticus (strain JCSC1435) protein is Large ribosomal subunit protein uL15.